The sequence spans 133 residues: Phosphoribosyl-AMP cyclohydrolase (133 aa).

Asp-77 contributes to the Mg(2+) binding site. Residue Cys-78 coordinates Zn(2+). Mg(2+) is bound by residues Asp-79 and Asp-81. Zn(2+) is bound by residues Cys-95 and Cys-102.

Belongs to the PRA-CH family. Homodimer. Requires Mg(2+) as cofactor. Zn(2+) serves as cofactor.

The protein localises to the cytoplasm. It carries out the reaction 1-(5-phospho-beta-D-ribosyl)-5'-AMP + H2O = 1-(5-phospho-beta-D-ribosyl)-5-[(5-phospho-beta-D-ribosylamino)methylideneamino]imidazole-4-carboxamide. It participates in amino-acid biosynthesis; L-histidine biosynthesis; L-histidine from 5-phospho-alpha-D-ribose 1-diphosphate: step 3/9. Functionally, catalyzes the hydrolysis of the adenine ring of phosphoribosyl-AMP. In Pseudomonas fluorescens (strain Pf0-1), this protein is Phosphoribosyl-AMP cyclohydrolase.